Here is a 235-residue protein sequence, read N- to C-terminus: Ubiquinone/menaquinone biosynthesis C-methyltransferase UbiE (235 aa).

Residues Thr-60, Asp-80, 106–107 (DV), and Ser-123 each bind S-adenosyl-L-methionine.

It belongs to the class I-like SAM-binding methyltransferase superfamily. MenG/UbiE family.

The enzyme catalyses a 2-demethylmenaquinol + S-adenosyl-L-methionine = a menaquinol + S-adenosyl-L-homocysteine + H(+). It catalyses the reaction a 2-methoxy-6-(all-trans-polyprenyl)benzene-1,4-diol + S-adenosyl-L-methionine = a 5-methoxy-2-methyl-3-(all-trans-polyprenyl)benzene-1,4-diol + S-adenosyl-L-homocysteine + H(+). It functions in the pathway quinol/quinone metabolism; menaquinone biosynthesis; menaquinol from 1,4-dihydroxy-2-naphthoate: step 2/2. It participates in cofactor biosynthesis; ubiquinone biosynthesis. Methyltransferase required for the conversion of demethylmenaquinol (DMKH2) to menaquinol (MKH2) and the conversion of 2-polyprenyl-6-methoxy-1,4-benzoquinol (DDMQH2) to 2-polyprenyl-3-methyl-6-methoxy-1,4-benzoquinol (DMQH2). This Bdellovibrio bacteriovorus (strain ATCC 15356 / DSM 50701 / NCIMB 9529 / HD100) protein is Ubiquinone/menaquinone biosynthesis C-methyltransferase UbiE.